We begin with the raw amino-acid sequence, 130 residues long: Metastasis-suppressor KiSS-1 (130 aa).

An N-terminal signal peptide occupies residues 1–19; the sequence is MISLASWQLLLLLCVASFG. Positions 52–91 are disordered; the sequence is RYAESKPGAAGLRARRTSPCPPVENPTGHQRPPCATRSRL. Cysteine 71 and cysteine 85 are oxidised to a cystine. Tyrosine 110 carries the post-translational modification Phosphotyrosine. Positions 110 to 119 are essential for receptor binding and receptor activation; it reads YNWNSFGLRY. Tyrosine 119 bears the Tyrosine amide mark.

This sequence belongs to the KISS1 family. In terms of tissue distribution, highest levels in the cecum and colon. Moderate levels present in the liver, spleen, kidney, ovary, uterus and small intestine. Low levels in the stomach, pancreas and placenta. Expressed only moderately in the placenta. Persistent expression is detected in hypothalamus throughout postnatal development, with maximum expression levels at puberty in both male and female. Hypothalamic expression is sensitive to neonatal imprinting by estrogen. Expression is higher in the hypothalamus than in the brainstem and spinal cord. In the brain, metastin-like immunoreactivity is found mainly in three groups of cells: dorsomedial hypothalamic nucleus, nucleus of the solitary tract, and caudal ventrolateral medulla.

It is found in the secreted. Its function is as follows. Metastasis suppressor protein. May regulate events downstream of cell-matrix adhesion, perhaps involving cytoskeletal reorganization. Generates a C-terminally amidated peptide, metastin which functions as the endogenous ligand of the G-protein coupled receptor GPR54. The receptor is also essential for normal gonadotropin-released hormone physiology and for puberty. The hypothalamic KiSS1/GPR54 system is a pivotal factor in central regulation of the gonadotropic axis at puberty and in adulthood. Intracerebroventricular administration induces an increase in serum LH and FSH levels in prepubertal male and female as well as in adult animals. The protein is Metastasis-suppressor KiSS-1 (Kiss1) of Rattus norvegicus (Rat).